Here is a 404-residue protein sequence, read N- to C-terminus: S-adenosylmethionine synthase (404 aa).

139–144 (GKGSTD) contributes to the ATP binding site.

It belongs to the AdoMet synthase 2 family. Requires Mg(2+) as cofactor.

It carries out the reaction L-methionine + ATP + H2O = S-adenosyl-L-methionine + phosphate + diphosphate. Its pathway is amino-acid biosynthesis; S-adenosyl-L-methionine biosynthesis; S-adenosyl-L-methionine from L-methionine: step 1/1. Catalyzes the formation of S-adenosylmethionine from methionine and ATP. In Saccharolobus islandicus (strain L.S.2.15 / Lassen #1) (Sulfolobus islandicus), this protein is S-adenosylmethionine synthase.